We begin with the raw amino-acid sequence, 268 residues long: Imidazole glycerol phosphate synthase subunit HisF (268 aa).

Active-site residues include Asp-12 and Asp-131.

This sequence belongs to the HisA/HisF family. As to quaternary structure, heterodimer of HisH and HisF.

The protein resides in the cytoplasm. The catalysed reaction is 5-[(5-phospho-1-deoxy-D-ribulos-1-ylimino)methylamino]-1-(5-phospho-beta-D-ribosyl)imidazole-4-carboxamide + L-glutamine = D-erythro-1-(imidazol-4-yl)glycerol 3-phosphate + 5-amino-1-(5-phospho-beta-D-ribosyl)imidazole-4-carboxamide + L-glutamate + H(+). It participates in amino-acid biosynthesis; L-histidine biosynthesis; L-histidine from 5-phospho-alpha-D-ribose 1-diphosphate: step 5/9. Its function is as follows. IGPS catalyzes the conversion of PRFAR and glutamine to IGP, AICAR and glutamate. The HisF subunit catalyzes the cyclization activity that produces IGP and AICAR from PRFAR using the ammonia provided by the HisH subunit. In Salinibacter ruber (strain DSM 13855 / M31), this protein is Imidazole glycerol phosphate synthase subunit HisF.